The sequence spans 364 residues: MKYIPVYQPSLTGKEKEYVNECLDSTWISSKGNYIQKFENKFAEQNHVQYATTVSNGTVALHLALLALGISEGDEVIVPTLTYIASVNAIKYTGATPIFVDSDNETWQMSVSDIEQKITNKTKAIMCVHLYGHPCDMEQIVELAKSRNLFVIEDCAEAFGSKYKGKYVGTFGDISTFSFFGNKTITTGEGGMVVTNDKTLYDRCLHFKGQGLAVHRQYWHDVIGYNYRMTNICAAIGLAQLEQADDFISRKREIADIYKKNINSLVQVHKESKDVFHTYWMVSILTRTAEEREELRNHLADKLIETRPVFYPVHTMPMYSEKYQKHPIAEDLGWRGINLPSFPSLSNEQVIYICESINEFYSDK.

Lys183 carries the N6-(pyridoxal phosphate)lysine modification.

The protein belongs to the DegT/DnrJ/EryC1 family. In terms of assembly, homodecamer. Requires pyridoxal 5'-phosphate as cofactor.

The catalysed reaction is GDP-alpha-D-perosamine + 2-oxoglutarate = GDP-4-dehydro-alpha-D-rhamnose + L-glutamate. Its pathway is bacterial outer membrane biogenesis; LPS O-antigen biosynthesis. With respect to regulation, divalent ions have no significant effect on activity. Catalyzes the synthesis of GDP-perosamine from GDP-4-keto-6-deoxy-D-mannose and L-glutamate. Can use only L-glutamate as amino donor. The chain is GDP-perosamine synthase from Escherichia coli O157:H7.